The following is a 192-amino-acid chain: Ion-translocating oxidoreductase complex subunit B (192 aa).

The tract at residues 1-26 (MNTIWIAVGALTFLGLVFGAILGYAS) is hydrophobic. A 4Fe-4S domain is found at 32–91 (EDDPVVEKIDAILPQSQCGQCGYPGCRPYAEAVGLQGEKINRCAPGGEAVMLKIADLLNV). Residues C49, C52, C57, C74, C117, C120, C123, C127, C147, C150, C153, and C157 each coordinate [4Fe-4S] cluster. 4Fe-4S ferredoxin-type domains follow at residues 108-137 (MLAV…GATR) and 138-167 (AMHT…LRPV).

Belongs to the 4Fe4S bacterial-type ferredoxin family. RnfB subfamily. The complex is composed of six subunits: RsxA, RsxB, RsxC, RsxD, RsxE and RsxG. [4Fe-4S] cluster serves as cofactor.

The protein localises to the cell inner membrane. Its function is as follows. Part of a membrane-bound complex that couples electron transfer with translocation of ions across the membrane. Required to maintain the reduced state of SoxR. This Salmonella arizonae (strain ATCC BAA-731 / CDC346-86 / RSK2980) protein is Ion-translocating oxidoreductase complex subunit B.